Consider the following 290-residue polypeptide: S-adenosylmethionine decarboxylase proenzyme (290 aa).

Ser-138 functions as the Schiff-base intermediate with substrate; via pyruvic acid in the catalytic mechanism. At Ser-138 the chain carries Pyruvic acid (Ser); by autocatalysis. The Proton acceptor; for processing activity role is filled by His-143. Cys-166 (proton donor; for catalytic activity) is an active-site residue.

It belongs to the prokaryotic AdoMetDC family. Type 2 subfamily. In terms of assembly, heterooctamer of four alpha and four beta chains arranged as a tetramer of alpha/beta heterodimers. Pyruvate is required as a cofactor. Post-translationally, is synthesized initially as an inactive proenzyme. Formation of the active enzyme involves a self-maturation process in which the active site pyruvoyl group is generated from an internal serine residue via an autocatalytic post-translational modification. Two non-identical subunits are generated from the proenzyme in this reaction, and the pyruvate is formed at the N-terminus of the alpha chain, which is derived from the carboxyl end of the proenzyme. The post-translation cleavage follows an unusual pathway, termed non-hydrolytic serinolysis, in which the side chain hydroxyl group of the serine supplies its oxygen atom to form the C-terminus of the beta chain, while the remainder of the serine residue undergoes an oxidative deamination to produce ammonia and the pyruvoyl group blocking the N-terminus of the alpha chain.

It catalyses the reaction S-adenosyl-L-methionine + H(+) = S-adenosyl 3-(methylsulfanyl)propylamine + CO2. It functions in the pathway amine and polyamine biosynthesis; S-adenosylmethioninamine biosynthesis; S-adenosylmethioninamine from S-adenosyl-L-methionine: step 1/1. Catalyzes the decarboxylation of S-adenosylmethionine to S-adenosylmethioninamine (dcAdoMet), the propylamine donor required for the synthesis of the polyamines spermine and spermidine from the diamine putrescine. The sequence is that of S-adenosylmethionine decarboxylase proenzyme from Heliobacterium modesticaldum (strain ATCC 51547 / Ice1).